Here is a 349-residue protein sequence, read N- to C-terminus: Probable myosin light chain kinase DDB_G0275057 (349 aa).

The segment at methionine 1–alanine 33 is disordered. Positions threonine 16 to alanine 33 are enriched in low complexity. A Protein kinase domain is found at tyrosine 56 to leucine 313. Residues leucine 62–valine 70 and lysine 85 contribute to the ATP site. Residue aspartate 178 is the Proton acceptor of the active site.

It belongs to the protein kinase superfamily. CAMK Ser/Thr protein kinase family. CaMK subfamily.

It catalyses the reaction L-seryl-[myosin light chain] + ATP = O-phospho-L-seryl-[myosin light chain] + ADP + H(+). The catalysed reaction is L-threonyl-[myosin light chain] + ATP = O-phospho-L-threonyl-[myosin light chain] + ADP + H(+). Does not have a calmodulin-binding domain. Functionally, may phosphorylate a specific serine in the N-terminus of a myosin light chain. This chain is Probable myosin light chain kinase DDB_G0275057, found in Dictyostelium discoideum (Social amoeba).